The following is a 299-amino-acid chain: Protease HtpX homolog (299 aa).

2 consecutive transmembrane segments (helical) span residues 14–34 (ILVMAGFVFLVALIGAAVGYL) and 39–59 (ATGGVIIALVIAVIYVSIMVG). Residue histidine 144 participates in Zn(2+) binding. Residue glutamate 145 is part of the active site. Residue histidine 148 coordinates Zn(2+). The next 2 membrane-spanning stretches (helical) occupy residues 159–179 (IALALTAAISLLVNFAGNFMW) and 196–216 (VFAIIGSILLIILAPLAATMV). Glutamate 225 contacts Zn(2+).

This sequence belongs to the peptidase M48B family. Zn(2+) is required as a cofactor.

The protein resides in the cell membrane. The sequence is that of Protease HtpX homolog from Limosilactobacillus fermentum (strain NBRC 3956 / LMG 18251) (Lactobacillus fermentum).